An 81-amino-acid polypeptide reads, in one-letter code: Small ribosomal subunit protein bS18A (81 aa).

Belongs to the bacterial ribosomal protein bS18 family. As to quaternary structure, part of the 30S ribosomal subunit. Forms a tight heterodimer with protein bS6.

In terms of biological role, binds as a heterodimer with protein bS6 to the central domain of the 16S rRNA, where it helps stabilize the platform of the 30S subunit. The polypeptide is Small ribosomal subunit protein bS18A (Saccharopolyspora erythraea (strain ATCC 11635 / DSM 40517 / JCM 4748 / NBRC 13426 / NCIMB 8594 / NRRL 2338)).